Consider the following 111-residue polypeptide: Putative FAD-linked sulfhydryl oxidase 347L (111 aa).

Residues 2–109 enclose the ERV/ALR sulfhydryl oxidase domain; that stretch reads TDIDPHIWGP…LPESVARKKW (108 aa). The cysteines at positions 49 and 52 are disulfide-linked.

Belongs to the IIV-6 347L family. FAD serves as cofactor.

The catalysed reaction is 2 R'C(R)SH + O2 = R'C(R)S-S(R)CR' + H2O2. Functionally, FAD-dependent sulfhydryl oxidase that catalyzes disulfide bond formation. The sequence is that of Putative FAD-linked sulfhydryl oxidase 347L from Invertebrate iridescent virus 6 (IIV-6).